Reading from the N-terminus, the 372-residue chain is sn-glycerol-3-phosphate import ATP-binding protein UgpC (372 aa).

The region spanning 2 to 233 is the ABC transporter domain; it reads LDIQQLVKTY…PASTFVASFI (232 aa). 35–42 is a binding site for ATP; sequence GPSGCGKS.

The protein belongs to the ABC transporter superfamily. sn-glycerol-3-phosphate importer (TC 3.A.1.1.3) family. As to quaternary structure, the complex is composed of two ATP-binding proteins (UgpC), two transmembrane proteins (UgpA and UgpE) and a solute-binding protein (UgpB).

Its subcellular location is the cell inner membrane. The catalysed reaction is sn-glycerol 3-phosphate(out) + ATP + H2O = sn-glycerol 3-phosphate(in) + ADP + phosphate + H(+). Its function is as follows. Part of the ABC transporter complex UgpBAEC involved in sn-glycerol-3-phosphate (G3P) import. Responsible for energy coupling to the transport system. The sequence is that of sn-glycerol-3-phosphate import ATP-binding protein UgpC from Vibrio vulnificus (strain YJ016).